The primary structure comprises 203 residues: Urease accessory protein UreG (203 aa).

14-21 contributes to the GTP binding site; that stretch reads GPVGSGKT.

The protein belongs to the SIMIBI class G3E GTPase family. UreG subfamily. Homodimer. UreD, UreF and UreG form a complex that acts as a GTP-hydrolysis-dependent molecular chaperone, activating the urease apoprotein by helping to assemble the nickel containing metallocenter of UreC. The UreE protein probably delivers the nickel.

The protein resides in the cytoplasm. In terms of biological role, facilitates the functional incorporation of the urease nickel metallocenter. This process requires GTP hydrolysis, probably effectuated by UreG. This chain is Urease accessory protein UreG, found in Rhizobium leguminosarum bv. trifolii (strain WSM2304).